The primary structure comprises 1390 residues: DNA-directed RNA polymerase subunit beta' (1390 aa).

4 residues coordinate Zn(2+): Cys73, Cys75, Cys88, and Cys91. The Mg(2+) site is built by Asp464, Asp466, and Asp468. The Zn(2+) site is built by Cys810, Cys884, Cys891, and Cys894. A disordered region spans residues 1365–1390 (EKKEQKIYGNGEEPAKEQKWIPQAGT).

It belongs to the RNA polymerase beta' chain family. As to quaternary structure, the RNAP catalytic core consists of 2 alpha, 1 beta, 1 beta' and 1 omega subunit. When a sigma factor is associated with the core the holoenzyme is formed, which can initiate transcription. It depends on Mg(2+) as a cofactor. Requires Zn(2+) as cofactor.

It catalyses the reaction RNA(n) + a ribonucleoside 5'-triphosphate = RNA(n+1) + diphosphate. DNA-dependent RNA polymerase catalyzes the transcription of DNA into RNA using the four ribonucleoside triphosphates as substrates. In Methylacidiphilum infernorum (isolate V4) (Methylokorus infernorum (strain V4)), this protein is DNA-directed RNA polymerase subunit beta'.